Here is an 89-residue protein sequence, read N- to C-terminus: Small ribosomal subunit protein uS15 (89 aa).

Belongs to the universal ribosomal protein uS15 family. As to quaternary structure, part of the 30S ribosomal subunit. Forms a bridge to the 50S subunit in the 70S ribosome, contacting the 23S rRNA.

Functionally, one of the primary rRNA binding proteins, it binds directly to 16S rRNA where it helps nucleate assembly of the platform of the 30S subunit by binding and bridging several RNA helices of the 16S rRNA. In terms of biological role, forms an intersubunit bridge (bridge B4) with the 23S rRNA of the 50S subunit in the ribosome. In Vibrio atlanticus (strain LGP32) (Vibrio splendidus (strain Mel32)), this protein is Small ribosomal subunit protein uS15.